The chain runs to 741 residues: Catalase-peroxidase (741 aa).

The signal sequence occupies residues 1–23; the sequence is MLKKIVTALGMSGMLLASSNAIA. The segment at residues 102–223 is a cross-link (tryptophyl-tyrosyl-methioninium (Trp-Tyr) (with M-249)); that stretch reads WHDAGTYRIY…YAATQMGLIY (122 aa). His103 (proton acceptor) is an active-site residue. The tryptophyl-tyrosyl-methioninium (Tyr-Met) (with W-102) cross-link spans 223–249; it reads YVNPEGPDGKPDIKGAASEIRQAFRAM. His264 serves as a coordination point for heme b.

Belongs to the peroxidase family. Peroxidase/catalase subfamily. Homodimer or homotetramer. It depends on heme b as a cofactor. Formation of the three residue Trp-Tyr-Met cross-link is important for the catalase, but not the peroxidase activity of the enzyme.

The catalysed reaction is H2O2 + AH2 = A + 2 H2O. The enzyme catalyses 2 H2O2 = O2 + 2 H2O. Its function is as follows. Bifunctional enzyme with both catalase and broad-spectrum peroxidase activity. The polypeptide is Catalase-peroxidase (Francisella tularensis subsp. tularensis (strain FSC 198)).